The primary structure comprises 236 residues: Thiamine-phosphate synthase (236 aa).

Residues 57-61 and Asn89 contribute to the 4-amino-2-methyl-5-(diphosphooxymethyl)pyrimidine site; that span reads QLRDK. Mg(2+)-binding residues include Asp90 and Asp109. Ser128 contributes to the 4-amino-2-methyl-5-(diphosphooxymethyl)pyrimidine binding site. 154–156 serves as a coordination point for 2-[(2R,5Z)-2-carboxy-4-methylthiazol-5(2H)-ylidene]ethyl phosphate; sequence TPS. Position 157 (Lys157) interacts with 4-amino-2-methyl-5-(diphosphooxymethyl)pyrimidine. 2-[(2R,5Z)-2-carboxy-4-methylthiazol-5(2H)-ylidene]ethyl phosphate-binding positions include Gly185 and 205 to 206; that span reads IS.

It belongs to the thiamine-phosphate synthase family. Mg(2+) serves as cofactor.

The catalysed reaction is 2-[(2R,5Z)-2-carboxy-4-methylthiazol-5(2H)-ylidene]ethyl phosphate + 4-amino-2-methyl-5-(diphosphooxymethyl)pyrimidine + 2 H(+) = thiamine phosphate + CO2 + diphosphate. The enzyme catalyses 2-(2-carboxy-4-methylthiazol-5-yl)ethyl phosphate + 4-amino-2-methyl-5-(diphosphooxymethyl)pyrimidine + 2 H(+) = thiamine phosphate + CO2 + diphosphate. It catalyses the reaction 4-methyl-5-(2-phosphooxyethyl)-thiazole + 4-amino-2-methyl-5-(diphosphooxymethyl)pyrimidine + H(+) = thiamine phosphate + diphosphate. The protein operates within cofactor biosynthesis; thiamine diphosphate biosynthesis; thiamine phosphate from 4-amino-2-methyl-5-diphosphomethylpyrimidine and 4-methyl-5-(2-phosphoethyl)-thiazole: step 1/1. Its function is as follows. Condenses 4-methyl-5-(beta-hydroxyethyl)thiazole monophosphate (THZ-P) and 2-methyl-4-amino-5-hydroxymethyl pyrimidine pyrophosphate (HMP-PP) to form thiamine monophosphate (TMP). In Roseiflexus sp. (strain RS-1), this protein is Thiamine-phosphate synthase.